A 334-amino-acid chain; its full sequence is ADP-L-glycero-D-manno-heptose-6-epimerase (334 aa).

Residues 11 to 12 (FI), 32 to 33 (DN), lysine 39, lysine 54, 77 to 81 (QGACS), and asparagine 94 each bind NADP(+). Tyrosine 141 acts as the Proton acceptor in catalysis. Lysine 145 is an NADP(+) binding site. Position 171 (asparagine 171) interacts with substrate. The NADP(+) site is built by valine 172 and lysine 180. Lysine 180 acts as the Proton acceptor in catalysis. Substrate is bound by residues arginine 182, histidine 189, 203-206 (FGSN), arginine 216, and tyrosine 295.

Belongs to the NAD(P)-dependent epimerase/dehydratase family. HldD subfamily. As to quaternary structure, homopentamer. NADP(+) is required as a cofactor.

The catalysed reaction is ADP-D-glycero-beta-D-manno-heptose = ADP-L-glycero-beta-D-manno-heptose. It participates in nucleotide-sugar biosynthesis; ADP-L-glycero-beta-D-manno-heptose biosynthesis; ADP-L-glycero-beta-D-manno-heptose from D-glycero-beta-D-manno-heptose 7-phosphate: step 4/4. Catalyzes the interconversion between ADP-D-glycero-beta-D-manno-heptose and ADP-L-glycero-beta-D-manno-heptose via an epimerization at carbon 6 of the heptose. This is ADP-L-glycero-D-manno-heptose-6-epimerase from Neisseria gonorrhoeae (strain ATCC 700825 / FA 1090).